The following is an 88-amino-acid chain: Meiosis-expressed gene 1 protein (88 aa).

Belongs to the MEIG1 family. In terms of assembly, interacts with PACRG. Interacts with MORN3. In terms of tissue distribution, expressed in the testes (at protein level). Expressed in the ovary. Several isoforms have been identified differing in their 5'-untranslated exons. These isoforms show different tissue expression. Some are expressed in various tissues, including lung, liver, brain, testis, oviduct and oocytes. Some are testis-specific.

In terms of biological role, essential for spermiogenesis. The sequence is that of Meiosis-expressed gene 1 protein from Mus musculus (Mouse).